We begin with the raw amino-acid sequence, 216 residues long: MSGRLLVLEGIDGCGKTTQLRHLANWLPRSGLMPEGARLHLTREPGGTALGMALRKLVLHPPGDASPEPLAELLLYAADRAQHVAQLIRPALEQGHWVLSDRFSGSTLAYQGYGRELDLDLIQQLEQIATAGLVPDLTFWLELSVEESLVRRDARSNDRIEAEGVDFLTRVATGFAVLARERSWVPLQADQQVESVSSALESQLKHHFGPLQESMR.

10 to 17 (GIDGCGKT) is a binding site for ATP.

This sequence belongs to the thymidylate kinase family.

It catalyses the reaction dTMP + ATP = dTDP + ADP. In terms of biological role, phosphorylation of dTMP to form dTDP in both de novo and salvage pathways of dTTP synthesis. In Prochlorococcus marinus (strain MIT 9303), this protein is Thymidylate kinase.